The chain runs to 835 residues: Axin-1 (835 aa).

The tract at residues 16–60 is disordered; sequence LGSSFTEDAPRPPVPGEEGDLVSSDGRQYNHSFYSSKSDSLKNEA. Positions 40 to 53 are enriched in polar residues; it reads DGRQYNHSFYSSKS. In terms of domain architecture, RGS spans 92 to 214; the sequence is SLHSLLDDQD…LKSDIYLEYT (123 aa). Residues 318–349 are disordered; that stretch reads ATSANDSEQQSMSSDADTLSLTDSSVDGVPPY. Residues 328–344 are compositionally biased toward low complexity; it reads SMSSDADTLSLTDSSVD. Residues 351–436 form an interaction with GSK3B region; sequence YRKPHRREIH…DADISTGPSL (86 aa). Positions 437–512 are interaction with beta-catenin; that stretch reads ANHRVPPAVH…SPDGLPAGKI (76 aa). 2 disordered regions span residues 485–530 and 602–627; these read KTPG…QARQ and GYSS…FEMR. Positions 616–627 are enriched in basic and acidic residues; that stretch reads RKGEDGRNFEMR. The DIX domain maps to 753–835; it reads CENITVAYYF…KIIGKVEKVD (83 aa).

Homodimer. Interacts with dixdc1. Interacts with hwa; leading to promote the tankyrase-mediated degradation of axin1. In terms of processing, ADP-ribosylated by tankyrase tnks and tnks2. Poly-ADP-ribosylated protein is recognized by rnf146, followed by ubiquitination at 'Lys-48' and subsequent activation of the Wnt signaling pathway. Post-translationally, ubiquitinated by rnf146 when poly-ADP-ribosylated, leading to its degradation and subsequent activation of the Wnt signaling pathway.

The protein localises to the cytoplasm. It localises to the nucleus. The protein resides in the membrane. Its subcellular location is the cell membrane. In terms of biological role, component of the beta-catenin destruction complex required for regulating ctnnb1 levels through phosphorylation and ubiquitination, and modulating Wnt-signaling. Controls dorsoventral patterning via two opposing effects: down-regulates ctnnb1 to inhibit the Wnt signaling pathway and ventralize embryos, but also dorsalizes embryos by activating a Wnt-independent JNK signaling pathway. The chain is Axin-1 (axin1) from Danio rerio (Zebrafish).